Reading from the N-terminus, the 94-residue chain is Sapecin (94 aa).

An N-terminal signal peptide occupies residues 1-23; the sequence is MKSFIVLAVTLCLAAFFMGQSVA. The propeptide occupies 24–54; that stretch reads SPAAAAEESKFVDGLHALKTIEPELHGRYKR. 3 disulfides stabilise this stretch: C57/C84, C70/C90, and C74/C92.

It belongs to the invertebrate defensin family. Type 1 subfamily. In terms of tissue distribution, hemocytes and fat body.

It localises to the secreted. In terms of biological role, sapecins, which are potent bactericidal proteins, are produced in response to injury. Sapecin is cytotoxic to Gram-positive bacteria, and to a lesser extent against Gram-negative bacteria. The sequence is that of Sapecin from Sarcophaga peregrina (Flesh fly).